A 31-amino-acid chain; its full sequence is MVTIFSYIALLLSALVITLTCYIGLLKIKLI.

Residues 4–24 (IFSYIALLLSALVITLTCYIG) form a helical membrane-spanning segment.

Belongs to the PetL family. The 4 large subunits of the cytochrome b6-f complex are cytochrome b6, subunit IV (17 kDa polypeptide, PetD), cytochrome f and the Rieske protein, while the 4 small subunits are PetG, PetL, PetM and PetN. The complex functions as a dimer.

It is found in the plastid. The protein resides in the chloroplast thylakoid membrane. Component of the cytochrome b6-f complex, which mediates electron transfer between photosystem II (PSII) and photosystem I (PSI), cyclic electron flow around PSI, and state transitions. PetL is important for photoautotrophic growth as well as for electron transfer efficiency and stability of the cytochrome b6-f complex. The polypeptide is Cytochrome b6-f complex subunit 6 (Chlorella vulgaris (Green alga)).